The following is a 60-amino-acid chain: Large ribosomal subunit protein bL32 (60 aa).

It belongs to the bacterial ribosomal protein bL32 family.

The chain is Large ribosomal subunit protein bL32 from Streptococcus gordonii (strain Challis / ATCC 35105 / BCRC 15272 / CH1 / DL1 / V288).